Here is a 150-residue protein sequence, read N- to C-terminus: Group IIC secretory phospholipase A2 (150 aa).

Positions 1 to 20 (MKGIAVFLVFIFCWTTSTLS) are cleaved as a signal peptide. Intrachain disulfides connect cysteine 46–cysteine 143, cysteine 48–cysteine 64, cysteine 63–cysteine 121, cysteine 69–cysteine 150, cysteine 70–cysteine 114, cysteine 79–cysteine 107, cysteine 97–cysteine 112, and cysteine 99–cysteine 105. Residues tyrosine 47, glycine 49, and glycine 51 each contribute to the Ca(2+) site. Histidine 67 is an active-site residue. A Ca(2+)-binding site is contributed by aspartate 68. An N-linked (GlcNAc...) asparagine glycan is attached at asparagine 92. Aspartate 115 is an active-site residue.

The protein belongs to the phospholipase A2 family. The cofactor is Ca(2+).

The protein resides in the secreted. It carries out the reaction a 1,2-diacyl-sn-glycero-3-phosphocholine + H2O = a 1-acyl-sn-glycero-3-phosphocholine + a fatty acid + H(+). Its function is as follows. PA2 catalyzes the calcium-dependent hydrolysis of the 2-acyl groups in 3-sn-phosphoglycerides. The sequence is that of Group IIC secretory phospholipase A2 (Pla2g2c) from Rattus norvegicus (Rat).